Consider the following 285-residue polypeptide: Transcription factor E2F6 (285 aa).

Lys-9 is covalently cross-linked (Glycyl lysine isopeptide (Lys-Gly) (interchain with G-Cter in SUMO2)). A DNA-binding region spans residues 50–129 (YVSMRKALKV…SKNHIRWIGS (80 aa)). The DEF box motif lies at 95–129 (KLGVRKRRVYDITNVLDGIDLVEKKSKNHIRWIGS). A dimerization region spans residues 130 to 222 (DLSNFGAVPQ…PAPKEDSITV (93 aa)). Residues 143–164 (LQEELSDLSAMEDALDELIKDC) are leucine-zipper. Residues 173-285 (DDKENERLAY…QSEEVLEVSN (113 aa)) are transcription repression. A disordered region spans residues 240 to 285 (QGSHSSNKTSDNVGTSSSKSKPLEHPQPEKEENPPQQSEEVLEVSN). The segment covering 241 to 259 (GSHSSNKTSDNVGTSSSKS) has biased composition (polar residues). Residues 260-272 (KPLEHPQPEKEEN) show a composition bias toward basic and acidic residues.

It belongs to the E2F/DP family. As to quaternary structure, forms heterodimers with DP family members TFDP1 or TFDP2. Component of the DRTF1/E2F transcription factor complex. Part of the E2F6.com-1 complex in G0 phase composed of E2F6, MGA, MAX, TFDP1, CBX3, BAT8, EUHMTASE1, RING1, RNF2, MBLR, L3MBTL2 and YAF2. Component of some MLL1/MLL complex, at least composed of the core components KMT2A/MLL1, ASH2L, HCFC1/HCF1, WDR5 and RBBP5, as well as the facultative components BACC1, CHD8, E2F6, HSP70, INO80C, KANSL1, LAS1L, MAX, MCRS1, MGA, KAT8/MOF, PELP1, PHF20, PRP31, RING2, RUVB1/TIP49A, RUVB2/TIP49B, SENP3, TAF1, TAF4, TAF6, TAF7, TAF9 and TEX10.

The protein resides in the nucleus. Its function is as follows. Inhibitor of E2F-dependent transcription. Binds DNA cooperatively with DP proteins through the E2 recognition site, 5'-TTTC[CG]CGC-3'. Has a preference for the 5'-TTTCCCGC-3' E2F recognition site. E2F6 lacks the transcriptional activation and pocket protein binding domains. Appears to regulate a subset of E2F-dependent genes whose products are required for entry into the cell cycle but not for normal cell cycle progression. Represses expression of some meiosis-specific genes, including SLC25A31/ANT4. May silence expression via the recruitment of a chromatin remodeling complex containing histone H3-K9 methyltransferase activity. Overexpression delays the exit of cells from the S-phase. This is Transcription factor E2F6 from Bos taurus (Bovine).